A 697-amino-acid polypeptide reads, in one-letter code: Phenoloxidase 1 (697 aa).

Residues 1–101 (MSDMSGDVVE…PKHQEMATEV (101 aa)) constitute a propeptide, removed by PPAE1. Residues His-217, His-221, and His-247 each contribute to the Cu cation site. N-linked (GlcNAc...) asparagine glycans are attached at residues Asn-260 and Asn-313. Glu-355 (proton acceptor) is an active-site residue. Cu cation-binding residues include His-370, His-374, and His-410. 2 N-linked (GlcNAc...) asparagine glycosylation sites follow: Asn-498 and Asn-552. Disulfide bonds link Cys-587/Cys-631 and Cys-589/Cys-638.

The protein belongs to the tyrosinase family. As to quaternary structure, heterodimer. It depends on Cu(2+) as a cofactor. In terms of processing, activated by the cleavage of the N-terminal propeptide by PPAE1. Expressed in hemocytes.

It localises to the secreted. The catalysed reaction is L-tyrosine + O2 = L-dopaquinone + H2O. The enzyme catalyses 2 L-dopa + O2 = 2 L-dopaquinone + 2 H2O. With respect to regulation, activated by a cationic detergent cetyl pyridinium chloride (CPC). Inhibited by phenyl thio-urea (PTU). In terms of biological role, this is a copper-containing oxidase that functions in the formation of pigments such as melanins and other polyphenolic compounds. Catalyzes the rate-limiting conversions of tyrosine to DOPA, DOPA to DOPA-quinone and possibly 5,6 dihydroxyindole to indole-5'6 quinone. Catalyzes the oxidation of 4-methylcatechol. Binds to the surface of hemocytes and is involved in hemocyte melanization. The chain is Phenoloxidase 1 from Spodoptera litura (Asian cotton leafworm).